The chain runs to 547 residues: Chaperonin GroEL (547 aa).

ATP-binding positions include 30-33 (TLGP), 87-91 (DGTTT), glycine 414, 478-480 (DAL), and aspartate 494.

It belongs to the chaperonin (HSP60) family. Forms a cylinder of 14 subunits composed of two heptameric rings stacked back-to-back. Interacts with the co-chaperonin GroES.

The protein resides in the cytoplasm. The enzyme catalyses ATP + H2O + a folded polypeptide = ADP + phosphate + an unfolded polypeptide.. Together with its co-chaperonin GroES, plays an essential role in assisting protein folding. The GroEL-GroES system forms a nano-cage that allows encapsulation of the non-native substrate proteins and provides a physical environment optimized to promote and accelerate protein folding. This is Chaperonin GroEL from Desulforudis audaxviator (strain MP104C).